The following is a 431-amino-acid chain: tRNA(Ile)-lysidine synthase (431 aa).

Residue 19 to 24 (STGIDS) participates in ATP binding.

This sequence belongs to the tRNA(Ile)-lysidine synthase family.

The protein resides in the cytoplasm. The catalysed reaction is cytidine(34) in tRNA(Ile2) + L-lysine + ATP = lysidine(34) in tRNA(Ile2) + AMP + diphosphate + H(+). In terms of biological role, ligates lysine onto the cytidine present at position 34 of the AUA codon-specific tRNA(Ile) that contains the anticodon CAU, in an ATP-dependent manner. Cytidine is converted to lysidine, thus changing the amino acid specificity of the tRNA from methionine to isoleucine. The polypeptide is tRNA(Ile)-lysidine synthase (Staphylococcus aureus (strain MW2)).